A 95-amino-acid polypeptide reads, in one-letter code: uncharacterized protein (95 aa).

The tract at residues 65 to 95 (DANDYDTTTTEEEDSSTTTTTDNETNSDDDI) is disordered.

This is an uncharacterized protein from Lymantria dispar multicapsid nuclear polyhedrosis virus (LdMNPV).